Here is a 201-residue protein sequence, read N- to C-terminus: MAIDKTKNQHRINEAIRVKEVRLVGDNVEQGVYNIQEARRIAESQDLDLVEISPNADPPVCRVTDYQKFVYQLKKKAKEQKAKSVKIVIKEIRFGPQTDDHDYNFKLKHAKEFLQEGSKVKAYVFFRGRSILFKEQGEVLLLRFANDLEDFARVEQMPILEGKRMTIMLTPKSASKKGHTPPKTQVEASKQANESAETEEE.

A disordered region spans residues 170–201 (TPKSASKKGHTPPKTQVEASKQANESAETEEE). The span at 182 to 195 (PKTQVEASKQANES) shows a compositional bias: polar residues.

The protein belongs to the IF-3 family. As to quaternary structure, monomer.

The protein resides in the cytoplasm. In terms of biological role, IF-3 binds to the 30S ribosomal subunit and shifts the equilibrium between 70S ribosomes and their 50S and 30S subunits in favor of the free subunits, thus enhancing the availability of 30S subunits on which protein synthesis initiation begins. The chain is Translation initiation factor IF-3 from Porphyromonas gingivalis (strain ATCC BAA-308 / W83).